A 111-amino-acid chain; its full sequence is Probable 4-amino-4-deoxy-L-arabinose-phosphoundecaprenol flippase subunit ArnE (111 aa).

A run of 3 helical transmembrane segments spans residues 36–56, 61–81, and 88–108; these read IVLW…LWLL, VPVG…TLAA, and PVSP…VILG. The EamA domain maps to 40–109; that stretch reads LGLALACIGL…IIGGIVILGS (70 aa).

This sequence belongs to the ArnE family. In terms of assembly, heterodimer of ArnE and ArnF.

It is found in the cell inner membrane. It functions in the pathway bacterial outer membrane biogenesis; lipopolysaccharide biosynthesis. Its function is as follows. Translocates 4-amino-4-deoxy-L-arabinose-phosphoundecaprenol (alpha-L-Ara4N-phosphoundecaprenol) from the cytoplasmic to the periplasmic side of the inner membrane. This Shigella flexneri serotype 5b (strain 8401) protein is Probable 4-amino-4-deoxy-L-arabinose-phosphoundecaprenol flippase subunit ArnE.